A 112-amino-acid chain; its full sequence is Protein lin-52 homolog (112 aa).

Belongs to the lin-52 family. In terms of assembly, component of the DREAM complex. In terms of tissue distribution, expressed in the brain, liver and retina. Highly expressed in the retinal ganglion cell and inner nuclear layers at the parr stage. Expressed at a lower level in inner segments of some retinal photoreceptors.

Functionally, may be involved in retinal development. The chain is Protein lin-52 homolog (lin52) from Oncorhynchus mykiss (Rainbow trout).